A 230-amino-acid polypeptide reads, in one-letter code: Acetyltransferase (230 aa).

Residues 143–230 (RYLDGKVICD…RVAVYKARQT (88 aa)) enclose the N-acetyltransferase domain.

Its pathway is mycotoxin biosynthesis. Acetyltransferase; part of the satratoxin SC3 cluster involved in the biosynthesis of satratoxins, trichothecene mycotoxins that are associated with human food poisonings. Satratoxins are suggested to be made by products of multiple gene clusters (SC1, SC2 and SC3) that encode 21 proteins in all, including polyketide synthases, acetyltransferases, and other enzymes expected to modify the trichothecene skeleton. SC1 encodes 10 proteins, SAT1 to SAT10. The largest are SAT8, which encodes a putative polyketide synthase (PKS) with a conventional non-reducing architecture, and SAT10, a putative protein containing four ankyrin repeats and thus may be involved in protein scaffolding. The putative short-chain reductase SAT3 may assist the PKS in some capacity. SAT6 contains a secretory lipase domain and acts probably as a trichothecene esterase. SAT5 encodes a putative acetyltransferase, and so, with SAT6, may affect endogenous protection from toxicity. The probable transcription factor SAT9 may regulate the expression of the SC1 cluster. SC2 encodes proteins SAT11 to SAT16, the largest of which encodes the putative reducing PKS SAT13. SAT11 is a cytochrome P450 monooxygenase, while SAT14 and SAT16 are probable acetyltransferases. The SC2 cluster may be regulated by the transcription factor SAT15. SC3 is a small cluster that encodes 5 proteins, SAT17 to SAT21. SAT21 is a putative MFS-type transporter which may have a role in exporting secondary metabolites. The four other proteins putatively encoded in SC3 include the taurine hydroxylase-like protein SAT17, the O-methyltransferase SAT18, the acetyltransferase SAT19, and the Cys6-type zinc finger SAT20, the latter being probably involved in regulation of SC3 expression. The protein is Acetyltransferase of Stachybotrys chartarum (strain CBS 109288 / IBT 7711) (Toxic black mold).